The primary structure comprises 116 residues: Chondroitin proteoglycan 7 (116 aa).

An N-terminal signal peptide occupies residues 1–19 (MQTITILALIACVAVPIFA). Residues 29 to 102 (DVVESSGEGS…NAVVASDSPK (74 aa)) are disordered. Low complexity-rich tracts occupy residues 32-41 (ESSGEGSGES) and 48-58 (VESSGEGSGES). Residues Ser-68, Ser-72, Ser-76, Ser-84, and Ser-88 are each glycosylated (O-linked (Xyl...) (chondroitin sulfate) serine).

This Caenorhabditis elegans protein is Chondroitin proteoglycan 7.